Consider the following 860-residue polypeptide: DNA mismatch repair protein MutS (860 aa).

607-614 (GPNMSGKS) lines the ATP pocket.

The protein belongs to the DNA mismatch repair MutS family.

This protein is involved in the repair of mismatches in DNA. It is possible that it carries out the mismatch recognition step. This protein has a weak ATPase activity. This Listeria monocytogenes serovar 1/2a (strain ATCC BAA-679 / EGD-e) protein is DNA mismatch repair protein MutS.